The following is a 412-amino-acid chain: Serine hydroxymethyltransferase (412 aa).

(6S)-5,6,7,8-tetrahydrofolate is bound by residues L117 and 121-123 (GHL). K226 bears the N6-(pyridoxal phosphate)lysine mark.

It belongs to the SHMT family. As to quaternary structure, homodimer. The cofactor is pyridoxal 5'-phosphate.

The protein resides in the cytoplasm. The catalysed reaction is (6R)-5,10-methylene-5,6,7,8-tetrahydrofolate + glycine + H2O = (6S)-5,6,7,8-tetrahydrofolate + L-serine. The protein operates within one-carbon metabolism; tetrahydrofolate interconversion. Its pathway is amino-acid biosynthesis; glycine biosynthesis; glycine from L-serine: step 1/1. In terms of biological role, catalyzes the reversible interconversion of serine and glycine with tetrahydrofolate (THF) serving as the one-carbon carrier. This reaction serves as the major source of one-carbon groups required for the biosynthesis of purines, thymidylate, methionine, and other important biomolecules. Also exhibits THF-independent aldolase activity toward beta-hydroxyamino acids, producing glycine and aldehydes, via a retro-aldol mechanism. The protein is Serine hydroxymethyltransferase of Staphylococcus epidermidis (strain ATCC 35984 / DSM 28319 / BCRC 17069 / CCUG 31568 / BM 3577 / RP62A).